A 162-amino-acid chain; its full sequence is MSYSSTETSTYTTIDVEAVMRRITADLVMIAASTGAITESKAREYAHDIELLAKNGYLDYVDVTLISNGVEQKATRFHVNESGELANDRPGDARWPRIQGAYLRIVVNNRSTYDQAARQKLSGKMKISWSPCSDDISHSGLTQSGGREYSSNGYGMQRKDYN.

Residues His-138–Asn-162 form a disordered region. Polar residues predominate over residues Ser-139–Tyr-154.

Belongs to the HORMA family. HORMA1 subfamily. In terms of assembly, forms complexes with CdnC with 1:1 and 2:2 stoichimetry, and a 1:1:6 CdnC:Cap7:Cap6 complex.

Functionally, sensor protein of a CBASS antivirus system. CBASS (cyclic oligonucleotide-based antiphage signaling system) provides immunity against bacteriophage. The CD-NTase protein synthesizes cyclic nucleotides in response to infection; these serve as specific second messenger signals. The signals activate a diverse range of effectors, leading to bacterial cell death and thus abortive phage infection. A type III CBASS system. Expression of this CBASS system (Cap18-Cap6-Cap7-CdnC-CapW-Cap17) in a susceptible E.coli (strain MG1655) confers resistance to bacteriophage P1. The sensor protein for this CBASS system. Binds to a closure peptide, which allows it to activate CdnC for second messenger synthesis. The polypeptide is CD-NTase-associated protein 7 (Escherichia coli (strain KTE188)).